The following is a 135-amino-acid chain: Small ribosomal subunit protein uS12 (135 aa).

Positions 1-20 (MPTINQLVRKGRHSKVTKSK) are disordered. Residues 9–18 (RKGRHSKVTK) are compositionally biased toward basic residues.

The protein belongs to the universal ribosomal protein uS12 family. In terms of assembly, part of the 30S ribosomal subunit. Contacts proteins S8 and S17. May interact with IF1 in the 30S initiation complex.

Its function is as follows. With S4 and S5 plays an important role in translational accuracy. Functionally, interacts with and stabilizes bases of the 16S rRNA that are involved in tRNA selection in the A site and with the mRNA backbone. Located at the interface of the 30S and 50S subunits, it traverses the body of the 30S subunit contacting proteins on the other side and probably holding the rRNA structure together. The combined cluster of proteins S8, S12 and S17 appears to hold together the shoulder and platform of the 30S subunit. The sequence is that of Small ribosomal subunit protein uS12 from Lactobacillus acidophilus (strain ATCC 700396 / NCK56 / N2 / NCFM).